A 136-amino-acid chain; its full sequence is Salivary protein 15 Iric-2 (136 aa).

The first 22 residues, Met-1 to Ala-22, serve as a signal peptide directing secretion. The N-linked (GlcNAc...) asparagine glycan is linked to Asn-105. A CD4-binding region spans residues Gly-117 to Cys-136.

This sequence belongs to the salp15 family. As to quaternary structure, interacts with host CD4. Interacts with host DC-SIGN (CD209). Interacts with Borrelia outer surface protein C (OspC). As to expression, expressed in salivary glands. Detected in fed adult female.

It localises to the secreted. In terms of biological role, salivary tick protein that downregulates host immune system by binding to both dendritic cells, and CD4(+) T cells. Specifically binds to the CD4 coreceptor on T cells. This interaction prevents the activation of the Src kinase, Lck, and its downstream substrate Zap-70, and results in deficient activation of PLCgamma1, the repression of calcium fluxes triggered by T-cell antigen receptor (TCR) ligation, and a subsequent reduction in interleukin-2 production. This salivary protein also binds to DC-SIGN (CD209) on dendritic cells (DC) and activates the Raf-1 kinase/MEK signaling pathway that results in down-regulating expression of pro-inflammatory cytokines. Furthermore, it inhibits T cell proliferation induced by DCs. In addition, it inhibits in vitro keratinocyte inflammation induced by Borrelia burgdorferi or by the major outer surface protein (OspC) of Borrelia. In addition, it downregulates chemokines and monocyte chemoattractant protein 1, as well as several antimicrobial peptides such as defensins, cathelicidin, psoriasin, and RNase 7. Apart from its immunomodulatory activities, it is also associated with protection of Borrelia spirochetes from antibody-mediated killing through its binding to OspC. In vivo, tests on different immune disease animal models show promising therapeutic results, e.g., in inhibiting HIV infection, experimental autoimmune encephalomyelitis, transplantation rejection, and asthma. This Ixodes ricinus (Common tick) protein is Salivary protein 15 Iric-2.